A 144-amino-acid polypeptide reads, in one-letter code: Large ribosomal subunit protein uL15 (144 aa).

Residues 1–48 are disordered; the sequence is MQLNNLKPADGSKHAKRRVGRGIGSGLGKTAGRGHKGQKSRSGGFHKV. The span at 21–31 shows a compositional bias: gly residues; that stretch reads RGIGSGLGKTA.

Belongs to the universal ribosomal protein uL15 family. As to quaternary structure, part of the 50S ribosomal subunit.

Binds to the 23S rRNA. The polypeptide is Large ribosomal subunit protein uL15 (Cupriavidus metallidurans (strain ATCC 43123 / DSM 2839 / NBRC 102507 / CH34) (Ralstonia metallidurans)).